The sequence spans 396 residues: Ribosomal RNA large subunit methyltransferase I (396 aa).

A PUA domain is found at 2 to 79 (AIRIKLKPGR…REEEIDREFF (78 aa)).

It belongs to the methyltransferase superfamily. RlmI family.

Its subcellular location is the cytoplasm. It catalyses the reaction cytidine(1962) in 23S rRNA + S-adenosyl-L-methionine = 5-methylcytidine(1962) in 23S rRNA + S-adenosyl-L-homocysteine + H(+). In terms of biological role, specifically methylates the cytosine at position 1962 (m5C1962) of 23S rRNA. The protein is Ribosomal RNA large subunit methyltransferase I of Shewanella oneidensis (strain ATCC 700550 / JCM 31522 / CIP 106686 / LMG 19005 / NCIMB 14063 / MR-1).